Reading from the N-terminus, the 292-residue chain is MTSASELRSGKTHRDENFPVASWIIHPRHRDLILAFYNFVRTADDIADHEMLDGDTKLEYLDLLEAELLGRGETQPEAVHLRRALAERGMPPRHALDLLTAFRMDVTKLRYEDWDEVIHYCRYSAMPVGRFMLDVHGESTTTWQASDALCAGLQINNHLQDCGKDYRTLNRVYLPRDVLDAAGAKVEDLGLQKSSPALLKCLQGLAVRTASLLGDGRPLAAEIKDYRLGLEVSVIQAYADRIVRMLQTRDPLSERVHLKPIEFVIASFGAMSSEIVRRSFGKGPVSHPAPRA.

It belongs to the phytoene/squalene synthase family. HpnC subfamily.

It carries out the reaction presqualene diphosphate + H2O = hydroxysqualene + diphosphate. It functions in the pathway secondary metabolite biosynthesis; hopanoid biosynthesis. Its function is as follows. Involved in the biosynthesis of the hopanoid precursor squalene (SQ) from farnesyl diphosphate (FPP). Catalyzes the second step, the conversion of presqualene diphosphate (PSPP) to hydroxysqualene (HSQ). The chain is Hydroxysqualene synthase from Rhodopseudomonas palustris (strain ATCC BAA-98 / CGA009).